The primary structure comprises 589 residues: Protein POF1B (589 aa).

Residues 334–443 (TFSNIREELG…QNLRMQVSET (110 aa)) adopt a coiled-coil conformation.

In terms of assembly, interacts with nonmuscle actin.

The protein resides in the cell junction. It is found in the tight junction. Plays a key role in the organization of epithelial monolayers by regulating the actin cytoskeleton. May be involved in ovary development. The protein is Protein POF1B (POF1B) of Homo sapiens (Human).